Reading from the N-terminus, the 342-residue chain is Farnesyl pyrophosphate synthase 1 (342 aa).

Lysine 48, arginine 51, and glutamine 86 together coordinate isopentenyl diphosphate. Residues aspartate 93 and aspartate 97 each contribute to the Mg(2+) site. Arginine 102 lines the dimethylallyl diphosphate pocket. An isopentenyl diphosphate-binding site is contributed by arginine 103. Residues lysine 190, threonine 191, glutamine 229, lysine 246, and lysine 255 each coordinate dimethylallyl diphosphate.

It belongs to the FPP/GGPP synthase family. Requires Mg(2+) as cofactor.

The protein resides in the cytoplasm. The enzyme catalyses isopentenyl diphosphate + dimethylallyl diphosphate = (2E)-geranyl diphosphate + diphosphate. It carries out the reaction isopentenyl diphosphate + (2E)-geranyl diphosphate = (2E,6E)-farnesyl diphosphate + diphosphate. The protein operates within isoprenoid biosynthesis; farnesyl diphosphate biosynthesis; farnesyl diphosphate from geranyl diphosphate and isopentenyl diphosphate: step 1/1. It participates in isoprenoid biosynthesis; geranyl diphosphate biosynthesis; geranyl diphosphate from dimethylallyl diphosphate and isopentenyl diphosphate: step 1/1. In terms of biological role, catalyzes the sequential condensation of isopentenyl pyrophosphate with the allylic pyrophosphates, dimethylallyl pyrophosphate, and then with the resultant geranylpyrophosphate to the ultimate product farnesyl pyrophosphate. This is Farnesyl pyrophosphate synthase 1 (FPS1) from Parthenium argentatum (Guayule rubber plant).